The chain runs to 724 residues: Probable dipeptidyl-peptidase 5 (724 aa).

Positions 1 to 19 are cleaved as a signal peptide; it reads MGALTWLSVVAAAASTALA. N-linked (GlcNAc...) asparagine glycans are attached at residues Asn76, Asn97, Asn154, Asn257, Asn383, and Asn453. Ser563 serves as the catalytic Charge relay system. A glycan (N-linked (GlcNAc...) asparagine) is linked at Asn610. Active-site charge relay system residues include Asp646 and His678.

It belongs to the peptidase S9C family.

The protein localises to the secreted. Its function is as follows. Extracellular dipeptidyl-peptidase which removes N-terminal dipeptides sequentially from polypeptides having unsubstituted N-termini. The protein is Probable dipeptidyl-peptidase 5 (dpp5) of Aspergillus clavatus (strain ATCC 1007 / CBS 513.65 / DSM 816 / NCTC 3887 / NRRL 1 / QM 1276 / 107).